Here is a 364-residue protein sequence, read N- to C-terminus: Thebaine 6-O-demethylase (364 aa).

Residues 214 to 314 (GTQAMRMNYY…RLSIATFHDP (101 aa)) enclose the Fe2OG dioxygenase domain. Y223 lines the 2-oxoglutarate pocket. The Fe cation site is built by H238, D240, and H295. 2 residues coordinate 2-oxoglutarate: R305 and S307.

The protein belongs to the iron/ascorbate-dependent oxidoreductase family. It depends on L-ascorbate as a cofactor. Fe cation serves as cofactor. As to expression, mainly expressed in stems and leaves and, to a lower extent, in capsules and roots.

It carries out the reaction thebaine + 2-oxoglutarate + O2 = neopinone + formaldehyde + succinate + CO2. It catalyses the reaction oripavine + 2-oxoglutarate + O2 = neomorphinone + formaldehyde + succinate + CO2. The enzyme catalyses (S)-canadine + S-adenosyl-L-methionine = (S)-cis-N-methylcanadine + S-adenosyl-L-homocysteine. The catalysed reaction is thebaine + 2-oxoglutarate + O2 = 6-O-demethylthebaine + formaldehyde + succinate + CO2 + H(+). It functions in the pathway alkaloid biosynthesis; morphine biosynthesis. Moderate substrate inhibition. Not inhibited in vitro by acylcyclohexanediones. In terms of biological role, non-heme dioxygenase involved in biosynthesis of morphinan-type benzylisoquinoline and opiate alkaloids natural products. Mediates the conversion of thebaine to neopinone. Also catalyzes, with lower efficiency, the 6-O-demethylation of oripavine to neomorphinone, which is converted spontaneously to morphinone. Supports dealkylation reactions such as O,O-demethylenation in the metabolism of protopine, benzo[c]phenanthridine, and rhoeadine alkaloids; cleaves a methylenedioxy bridge leaving two hydroxyl groups. Catalyzes the O-demethylation of methylenedioxy bridges on protopine alkaloids such as allocryptopine. No activity with (S)-reticuline, salutaridine, papaverine, (S)-corytuberine, (S)-scoulerine, pavine, noscapine or codeine. The protein is Thebaine 6-O-demethylase of Papaver somniferum (Opium poppy).